Consider the following 103-residue polypeptide: MTETNKNIHQEAEQEITLIDDQGNEELYQVLFTFDSEDYGKSYVLLYPASSAEDEEVDIQAFAFTSDVAGDASQGDLFPIEDDEEWEMVEEVLNTFLADDNMQ.

Belongs to the UPF0473 family.

This Latilactobacillus sakei subsp. sakei (strain 23K) (Lactobacillus sakei subsp. sakei) protein is UPF0473 protein LCA_0390.